The primary structure comprises 626 residues: tRNA uridine 5-carboxymethylaminomethyl modification enzyme MnmG (626 aa).

13-18 (GGGHAG) provides a ligand contact to FAD. 273–287 (GPRYCPSIEDKIHRF) is an NAD(+) binding site.

This sequence belongs to the MnmG family. Homodimer. Heterotetramer of two MnmE and two MnmG subunits. FAD serves as cofactor.

Its subcellular location is the cytoplasm. Functionally, NAD-binding protein involved in the addition of a carboxymethylaminomethyl (cmnm) group at the wobble position (U34) of certain tRNAs, forming tRNA-cmnm(5)s(2)U34. The chain is tRNA uridine 5-carboxymethylaminomethyl modification enzyme MnmG from Acinetobacter baumannii (strain ATCC 17978 / DSM 105126 / CIP 53.77 / LMG 1025 / NCDC KC755 / 5377).